Here is a 168-residue protein sequence, read N- to C-terminus: MGAFTEKQEALVNSSFEAFKANLPHHSVVFFNSGSVHNSVFGLIKKQNNRILEKAPAAKNMFSFLGDAVDPKNPKLAGHAEKLFGLVRDSAVQLQTKGLVVADATLGPIHTQKGVTDLQFAVVKEALLKTIKEAVGDKWSEELSNAWEVAYDEIAAAIKKAMAIGSLV.

The 161-residue stretch at 3–163 (AFTEKQEALV…IAAAIKKAMA (161 aa)) folds into the Globin domain. Ser63 contacts heme b. Ser63 carries the post-translational modification Phosphoserine. His79 provides a ligand contact to O2. Heme b contacts are provided by Lys82, His110, and Lys113. Tyr151 carries the post-translational modification Nitrated tyrosine.

This sequence belongs to the plant globin family. In terms of assembly, monomer. In terms of processing, nitrated in effective nodules and particularly in hypoxic conditions; this mechanism may play a protective role in the symbiosis by buffering toxic peroxynitrite NO(2)(-). Nitration level decrease during nodule senescence. Phosphorylation at Ser-63 disrupts the molecular environment of its porphyrin ring oxygen binding pocket, thus leading to a reduced oxygen consumption and to the delivery of oxygen O(2) to symbiosomes. As to expression, expressed in root nodules and flowers.

It localises to the cytoplasm. The protein localises to the cytosol. Its subcellular location is the nucleus. Its function is as follows. Leghemoglobin that reversibly binds oxygen O(2) through a pentacoordinated heme iron. In root nodules, facilitates the diffusion of oxygen to the bacteroids while preventing the bacterial nitrogenase from being inactivated by buffering dioxygen, nitric oxide and carbon monoxide, and promoting the formation of reactive oxygen species (ROS, e.g. H(2)O(2)). This role is essential for symbiotic nitrogen fixation (SNF). Maybe involved in water stress tolerance. The chain is Leghemoglobin 5 from Glycine max (Soybean).